The chain runs to 257 residues: Exosome complex component Rrp4 (257 aa).

The S1 motif domain maps to 65–137 (GDNVLGKIVD…EVNQIDLTTK (73 aa)). Residues 147 to 206 (RGGQLVTITPSKVPRLIGKGGSMINMIKTLTGTRIIVGQNGWVWVSGKNDELERLAIEAI) form the KH domain.

Belongs to the RRP4 family. As to quaternary structure, component of the archaeal exosome complex. Forms a trimer of Rrp4 and/or Csl4 subunits. The trimer associates with a hexameric ring-like arrangement composed of 3 Rrp41-Rrp42 heterodimers.

It localises to the cytoplasm. In terms of biological role, non-catalytic component of the exosome, which is a complex involved in RNA degradation. Increases the RNA binding and the efficiency of RNA degradation. Confers strong poly(A) specificity to the exosome. In Thermococcus kodakarensis (strain ATCC BAA-918 / JCM 12380 / KOD1) (Pyrococcus kodakaraensis (strain KOD1)), this protein is Exosome complex component Rrp4.